We begin with the raw amino-acid sequence, 209 residues long: dTTP/UTP pyrophosphatase (209 aa).

Catalysis depends on Asp79, which acts as the Proton acceptor.

This sequence belongs to the Maf family. YhdE subfamily. Requires a divalent metal cation as cofactor.

The protein resides in the cytoplasm. It catalyses the reaction dTTP + H2O = dTMP + diphosphate + H(+). The catalysed reaction is UTP + H2O = UMP + diphosphate + H(+). Functionally, nucleoside triphosphate pyrophosphatase that hydrolyzes dTTP and UTP. May have a dual role in cell division arrest and in preventing the incorporation of modified nucleotides into cellular nucleic acids. This is dTTP/UTP pyrophosphatase from Chelativorans sp. (strain BNC1).